We begin with the raw amino-acid sequence, 130 residues long: Probable 15 kDa heat shock protein (130 aa).

The sHSP domain maps to 21-130 (ERVRILAPRV…LTKKIEVRSE (110 aa)).

It belongs to the small heat shock protein (HSP20) family.

The sequence is that of Probable 15 kDa heat shock protein (hsp15) from Leptospira interrogans serogroup Icterohaemorrhagiae serovar Lai (strain 56601).